Reading from the N-terminus, the 2524-residue chain is MTTNDTPIAIIGLSYRAPGVGRKGLWEYLSQARSAWTTVPTDRFDHSAYYKAGADRSGVSRVRGAHFIDDVYGFDAAFFNMRAEEAKNSDPQHRLLLECALEAAEDAGHSLLSIAGKKIGVFVGSGQHEYSQRLGDDEFATHTFAGTGVAPCMAANRISYFFDIDGPSVVTDAACASSVYAAHVAVSALRNGDCEAAFIGSASLNIGPGGWIVLEKTGALSEHGRSYSYDEKASGFGRGEGAGCLLVKRLDDAIRDGDPIRALIRNSACNHSGRSEGITMPNGLAQQKLLWNVHNAVGLHPGETPVVEGHGTGTAAGDPIEAGAFTAVLGKDRTAENPLYLGSIKSNFGHLEGASGMLAMVKAIMMVENGIVLPTAGFEKINPKIKDAEKIKVAETPLPWPKGEKKRAIVTNFGFGGSNSAIVIEKAPSRDELGHETNGTNGVSVSNGVNGSNGFTNGSNGTNGHAENGNGISAQERRLYTFSAKTEKSLNAYLSSFDEYLDEAPEDSDFAKDLSYTLGQRRTQHPYRVSVVADSVEDLQEKLSTVKPSRIKDRVIAFVFTGQGAQYAQMASELGHFKVFASALKDADAQLKAIGASWSLVSELAKPAEESRVDVAEISQPACTAVQLALVELLKSWGITPTAVTGHSSGEIGAAYAAGLITFRTAIAVAYFRGQAAALLAHKQTSKGAMLALGVGFEEASALIKEHSGDAYATVAAINSPKSVTVSGDVAALEAIHKVAEEQGLFARRLKIEMAYHSRHMEAVADYYLKAIAPFCEKNESFVSKSNAARPIFVSSVTGHVEDNSVVDATYWVKNLLQPVRFADSISGLFTQLGEDKSKIPNVIVEVGPHAALKSPIKQTVESLQLQGKSAFTYLPSLVRNVDGDQALLDLAGSLFTMGAPIQLGGVNQTDSKNAQVITGLPAYEWDKSAHYELKPRPTHEKLFPGEEYHELLGRRVVSNGGKERAWRQVFTLDEMPWIRDHVVAGATIFPMTAYMSAAIEACRRTLPVSSPASAFLVQNFHVVRSMEIAEEESVELMTKLVPAATGEGTTSSTAWAFEISTYKEESGWTIHAYGQIEPEFADMSLETPTFKASLPLVDTTADLLEHDIEGTYASAGVRATRYGPTFRNNVRFWEGKGYTVLEHRLRDLGQALHEPVTRGSPVSVDPPTLDGFLQGGGPLQVDEDGRRPAQMPNYINRFRVSNKIPSDPQTRFDVVMRRLDYDVKGGRMHVGVAAFARNTDGTLSPIAEWESAAFRNIGSADENIDPASDVPDNWAWEKLPRYDFLSLEELRKTLSVGSLGEEEGIRSTNLEKAAVWYIGQALKKTVNDDFSELEDHLQRFLVWAKKTEAEYHTKFDEEPTELLQQVRDHDAQGALLCFIGEQLVPILRGEVEALEIMLAEGRLTKHYEADVVNAHLSQAVGDLADNLSNLEPSLKILEVGGGTAGTTLPILEALSRGRDEPGFLNYTFTDISAGFFEGSRQKLAKWQSRITFKKLDITKDPIDQGFSASDFDIVIAANVLHATPDMVQTMTNVRTLLKPGGKVFLLEANMHPPSVLPFSLLPGWWAAEDKYRDHAEGPMMPVKVWDQLLLDSGFSGVDVAIPGVWDSEVQLMSIMASTKIAQQEGKITICGASLDDKEIAFAKNVDDALSKHLDCKTEVKPYNTISPDDELTYIIFIDSQDHSVMLNPTPEIFKNVQKMLLHNSGLIWVVPEGASPDAHMIKGLMRTLRLEEAPKNLMVFDEVPLTPVGLKGIVKLAESLRNPEVRRDEDQDFHLHNGTIHLPRMRQLNEVKELFAVEQGIAYRKVQNIWEGGRALEMTIDAAGSPDSIYFRRTNVLQQPMGDDEVLIRVEAAGVSNRDLNLVLGSIPWAPPGYDGAGKVVKTGSHVSHLREGDDIFFLALESSAFATYKKMPAWHVAKIPSGLSITDASTLPLAYTLAVLGLIRTARLRKSDTILIHGAAGAVGQASIAIAQHIGATIFATAGTEAKREFIHQAFGIPKERIFTSRTAAFRDSILSATDNKGVNVIINSLGSEFITETWALAAKFGRFVEISKEAAFQNINLPMRAFDSNVTFSPVDIRELYKHQPDELRDVWSEVVDLLKRDVVKPIKPVTLIPISDFVSALRKLKSGDHLGKIVVTLGKDEKVVAESALSPTEVKLRTDGTYLVTGGTRGIGLDLAYWMIEHGAKNIVLLGRSGATGEEVKKMLKRYEGNDVTIRALACNVGIRDELVNVMEAIKDLPPVRGVVHSALLLSDKLFANSTHEDWQIVNTPRVQGAWNLNELLPADLDFFVLLSSFNGDTGNMGQAIYAGTAGFYDAFSRYRNARGQHTVSIALPIVLDVGYVADNNLTEILKQTLGVVLKMADIRALFKGAVSGPASPFHSNGKATAFKLYMEGQSLQNPPWKYFHPVHTRERLKADKDARLKAGATGGADMFTASWTTAEDPLEGLTEALITKVSAMTMIERDEVLPDAPLTSYSLDSLVSVELRNWIRRETTVELPLSSITQAESLRALATDILSQRVI.

The Ketosynthase family 3 (KS3) domain occupies 5-426 (DTPIAIIGLS…GSNSAIVIEK (422 aa)). Residues cysteine 175, histidine 310, and histidine 350 each act as for beta-ketoacyl synthase activity in the active site. Residues 431–470 (DELGHETNGTNGVSVSNGVNGSNGFTNGSNGTNGHAENGN) are disordered. The span at 437–464 (TNGTNGVSVSNGVNGSNGFTNGSNGTNG) shows a compositional bias: low complexity. The segment at 559–882 (VFTGQGAQYA…TYLPSLVRNV (324 aa)) is malonyl-CoA:ACP transacylase (MAT) domain. Serine 648 serves as the catalytic For malonyltransferase activity. Positions 950–1084 (HELLGRRVVS…GQIEPEFADM (135 aa)) are N-terminal hotdog fold. A PKS/mFAS DH domain is found at 950 to 1264 (HELLGRRVVS…FRNIGSADEN (315 aa)). The interval 950–1266 (HELLGRRVVS…NIGSADENID (317 aa)) is dehydratase (DH) domain. The Proton acceptor; for dehydratase activity role is filled by histidine 982. Positions 1102 to 1264 (ADLLEHDIEG…FRNIGSADEN (163 aa)) are C-terminal hotdog fold. Catalysis depends on aspartate 1171, which acts as the Proton donor; for dehydratase activity. The tract at residues 1418-1611 (SQAVGDLADN…IPGVWDSEVQ (194 aa)) is methyltransferase (CMet) domain. The interval 1825 to 2139 (GSPDSIYFRR…SGDHLGKIVV (315 aa)) is enoylreductase (ER) domain. The interval 2164–2339 (GTYLVTGGTR…HTVSIALPIV (176 aa)) is ketoreductase (KR) domain. A Carrier domain is found at 2445 to 2522 (DPLEGLTEAL…ALATDILSQR (78 aa)). Serine 2482 is modified (O-(pantetheine 4'-phosphoryl)serine).

Pantetheine 4'-phosphate is required as a cofactor.

In terms of biological role, highly reducing polyketide synthase; part of a gene cluster that mediates the biosynthesis of a yet unidentified natural product. The sequence is that of Highly reducing polyketide synthase Preu5 from Preussia isomera (Coprophilous fungus).